The following is a 918-amino-acid chain: Isoleucine--tRNA ligase (918 aa).

The 'HIGH' region signature appears at 57 to 67 (PYANGHIHIGT). Glu552 is a binding site for L-isoleucyl-5'-AMP. Positions 593-597 (KMSKS) match the 'KMSKS' region motif. Lys596 is a binding site for ATP. Cys886, Cys889, Cys906, and Cys909 together coordinate Zn(2+).

This sequence belongs to the class-I aminoacyl-tRNA synthetase family. IleS type 1 subfamily. In terms of assembly, monomer. Zn(2+) serves as cofactor.

It localises to the cytoplasm. The catalysed reaction is tRNA(Ile) + L-isoleucine + ATP = L-isoleucyl-tRNA(Ile) + AMP + diphosphate. Catalyzes the attachment of isoleucine to tRNA(Ile). As IleRS can inadvertently accommodate and process structurally similar amino acids such as valine, to avoid such errors it has two additional distinct tRNA(Ile)-dependent editing activities. One activity is designated as 'pretransfer' editing and involves the hydrolysis of activated Val-AMP. The other activity is designated 'posttransfer' editing and involves deacylation of mischarged Val-tRNA(Ile). In Thermotoga neapolitana (strain ATCC 49049 / DSM 4359 / NBRC 107923 / NS-E), this protein is Isoleucine--tRNA ligase.